The primary structure comprises 24 residues: FLPLLAGLAANFLPTIICKISYKC.

A disulfide bridge connects residues C18 and C24.

It belongs to the frog skin active peptide (FSAP) family. Brevinin subfamily. Monomer. As to expression, expressed by the skin glands.

The protein resides in the secreted. In terms of biological role, has a non-hemolytic activity. Has a broad spectrum of activity against both Gram-positive and Gram-negative bacteria, fungi and protozoa. The polypeptide is Gaegurin-6 (GGN6) (Glandirana rugosa (Japanese wrinkled frog)).